A 143-amino-acid chain; its full sequence is Endoribonuclease YbeY (143 aa).

His-109, His-113, and His-119 together coordinate Zn(2+).

It belongs to the endoribonuclease YbeY family. Requires Zn(2+) as cofactor.

It is found in the cytoplasm. Its function is as follows. Single strand-specific metallo-endoribonuclease involved in late-stage 70S ribosome quality control and in maturation of the 3' terminus of the 16S rRNA. The polypeptide is Endoribonuclease YbeY (Leptospira borgpetersenii serovar Hardjo-bovis (strain JB197)).